The sequence spans 822 residues: AP-1 complex subunit gamma-1 (822 aa).

The span at 593–604 shows a compositional bias: polar residues; sequence NGPSEIVQTNGE. Residues 593 to 627 are disordered; that stretch reads NGPSEIVQTNGETEPAPLETKPPPSGPQPTSQAND. Positions 702-817 constitute a GAE domain; that stretch reads PGIPSITAYS…QDLAEVNNFP (116 aa).

This sequence belongs to the adaptor complexes large subunit family. Adaptor protein complex 1 (AP-1) is a heterotetramer composed of two large adaptins (gamma-type subunit AP1G1 and beta-type subunit AP1B1), a medium adaptin (mu-type subunit AP1M1 or AP1M2) and a small adaptin (sigma-type subunit AP1S1 or AP1S2 or AP1S3). Interacts (via GAE domain) with RABEP1. Interacts with EPS15. Interacts with SYNRG/gamma-synergin. Interacts (via GAE domain) with AP1AR (via coiled-coil domain). Interacts with CLN3 (via dileucine motif); this interaction facilitates lysosomal targeting. Interacts (via GAE domain) with AFTPH/aftiphilin; the interaction is required to recruit AFTPH/aftiphilin to the perinuclear region of the cell. In terms of tissue distribution, widely expressed.

The protein localises to the golgi apparatus. It is found in the cytoplasmic vesicle. The protein resides in the clathrin-coated vesicle membrane. It localises to the cytoplasm. Its subcellular location is the perinuclear region. The protein localises to the clathrin-coated vesicle. It is found in the membrane. The protein resides in the clathrin-coated pit. Its function is as follows. Subunit of clathrin-associated adaptor protein complex 1 that plays a role in protein sorting in the late-Golgi/trans-Golgi network (TGN) and/or endosomes. The AP complexes mediate both the recruitment of clathrin to membranes and the recognition of sorting signals within the cytosolic tails of transmembrane cargo molecules. In association with AFTPH/aftiphilin in the aftiphilin/p200/gamma-synergin complex, involved in the trafficking of transferrin from early to recycling endosomes, and the membrane trafficking of furin and the lysosomal enzyme cathepsin D between the trans-Golgi network (TGN) and endosomes. This chain is AP-1 complex subunit gamma-1 (Ap1g1), found in Mus musculus (Mouse).